A 162-amino-acid polypeptide reads, in one-letter code: IIVTQTMKGLDIQKVAGTWHSLAMAASDISLLDAQSAPLRVYVEELKPTPEGNLEILLQKWENGECAQKKIIAEKTKIPAVFKIDALNENKVLVLDTDYKKYLLFCMENSAEPEQSLACQCLVRTPEVDNEALEKFDKALKALPMHIRLAFNPTQLEGQCHV.

Disulfide bonds link Cys-66–Cys-160, Cys-106–Cys-119, and Cys-106–Cys-121.

It belongs to the calycin superfamily. Lipocalin family. In terms of assembly, under physiological conditions beta-lactoglobulin exists as an equilibrium mixture of monomeric and dimeric forms. Post-translationally, alternate disulfide bonds occur in equal amounts.

The protein resides in the secreted. Functionally, lactoglobulin is the primary component of whey, it binds retinol and is probably involved in the transport of that molecule. In Ovis aries musimon (Mouflon), this protein is Beta-lactoglobulin (LGB).